A 594-amino-acid polypeptide reads, in one-letter code: Golgi-associated RAB2 interactor protein 4 (594 aa).

The interval 390–525 (AAGLPVSTRQ…SSGSSKRLGR (136 aa)) is disordered. Polar residues predominate over residues 396–406 (STRQSKSSLSG). 3 stretches are compositionally biased toward basic and acidic residues: residues 408 to 433 (HGRE…DKAL), 442 to 455 (TGES…DKIA), and 468 to 477 (ASRDGKKEKG). Residues 510–521 (RSSSTTSSGSSK) are compositionally biased toward low complexity.

This sequence belongs to the GARIN family. Interacts (via N-terminus) with RAB2B (in GTP-bound form).

It is found in the golgi apparatus. Its function is as follows. RAB2B effector protein required for the compacted Golgi morphology, probably through interaction with small GTPase RAB2B. This Macaca fascicularis (Crab-eating macaque) protein is Golgi-associated RAB2 interactor protein 4 (GARIN4).